Reading from the N-terminus, the 164-residue chain is Phosphopantetheine adenylyltransferase (164 aa).

Substrate is bound at residue Ser-9. Residues 9 to 10 (SF) and His-17 each bind ATP. Substrate is bound by residues Lys-41, Leu-73, and Lys-87. ATP contacts are provided by residues 88–90 (GLR), Glu-98, and 123–129 (NSFLSSS).

It belongs to the bacterial CoaD family. Homohexamer. The cofactor is Mg(2+).

The protein localises to the cytoplasm. The enzyme catalyses (R)-4'-phosphopantetheine + ATP + H(+) = 3'-dephospho-CoA + diphosphate. Its pathway is cofactor biosynthesis; coenzyme A biosynthesis; CoA from (R)-pantothenate: step 4/5. In terms of biological role, reversibly transfers an adenylyl group from ATP to 4'-phosphopantetheine, yielding dephospho-CoA (dPCoA) and pyrophosphate. The polypeptide is Phosphopantetheine adenylyltransferase (Clostridium kluyveri (strain ATCC 8527 / DSM 555 / NBRC 12016 / NCIMB 10680 / K1)).